A 188-amino-acid polypeptide reads, in one-letter code: dCTP deaminase (188 aa).

DCTP contacts are provided by residues 111-116 (KSTYAR), 135-137 (TLE), glutamine 156, tyrosine 170, and glutamine 180. The active-site Proton donor/acceptor is the glutamate 137.

Belongs to the dCTP deaminase family. Homotrimer.

It catalyses the reaction dCTP + H2O + H(+) = dUTP + NH4(+). The protein operates within pyrimidine metabolism; dUMP biosynthesis; dUMP from dCTP (dUTP route): step 1/2. Catalyzes the deamination of dCTP to dUTP. The protein is dCTP deaminase of Pseudomonas putida (strain W619).